The chain runs to 166 residues: Lipoprotein signal peptidase (166 aa).

Transmembrane regions (helical) follow at residues 12–32 (LPIALFILVALVADQAIKYLV), 66–86 (MEGWFIVGMRLAVVAFVLWLW), and 101–121 (AMIIAGALGNLVDRLLFGYVI). Catalysis depends on residues aspartate 122 and aspartate 140. Residues 132–152 (SFAVFNLADSFITVGAGAIIL) form a helical membrane-spanning segment.

The protein belongs to the peptidase A8 family.

It is found in the cell inner membrane. The enzyme catalyses Release of signal peptides from bacterial membrane prolipoproteins. Hydrolyzes -Xaa-Yaa-Zaa-|-(S,diacylglyceryl)Cys-, in which Xaa is hydrophobic (preferably Leu), and Yaa (Ala or Ser) and Zaa (Gly or Ala) have small, neutral side chains.. Its pathway is protein modification; lipoprotein biosynthesis (signal peptide cleavage). In terms of biological role, this protein specifically catalyzes the removal of signal peptides from prolipoproteins. The polypeptide is Lipoprotein signal peptidase (Sinorhizobium fredii (strain NBRC 101917 / NGR234)).